The following is a 299-amino-acid chain: Cytosolic sulfotransferase 1 (299 aa).

51-56 (KAGTTW) contacts 3'-phosphoadenylyl sulfate. The active-site Proton acceptor is the His-113. 3'-phosphoadenylyl sulfate is bound by residues Arg-135, Ser-143, Tyr-199, 233-238 (VQFDAM), and 261-263 (RKG).

It belongs to the sulfotransferase 1 family. As to expression, expressed in liver.

The protein resides in the cytoplasm. With respect to regulation, inhibited by Co(2+), Zn(2+), Cd(2+) and Pb(2+) ions. Inactivated by Hg(2+) and Cu(2+) ions. Functionally, sulfotransferase that utilizes 3'-phospho-5'-adenylyl sulfate (PAPS) as sulfonate donor to catalyze the sulfate conjugation of a variety of xenobiotic and endogenous compounds, including 2-naphthol, hydroxychlorobiphenyls, dopamine and T3 (triiodo-L-thyronine). This is Cytosolic sulfotransferase 1 from Danio rerio (Zebrafish).